The sequence spans 569 residues: Urease subunit beta (569 aa).

Residues 131–569 (GGIDTHIHFI…LSLAQLYNLF (439 aa)) enclose the Urease domain. Residues H136, H138, and K219 each coordinate Ni(2+). At K219 the chain carries N6-carboxylysine. H221 contributes to the substrate binding site. Ni(2+) is bound by residues H248 and H274. The active-site Proton donor is H322. Residue D362 participates in Ni(2+) binding.

It belongs to the metallo-dependent hydrolases superfamily. Urease alpha subunit family. In terms of assembly, heterohexamer of 3 UreA (alpha) and 3 UreB (beta) subunits. Requires Ni cation as cofactor. Carboxylation allows a single lysine to coordinate two nickel ions.

The protein resides in the cytoplasm. The enzyme catalyses urea + 2 H2O + H(+) = hydrogencarbonate + 2 NH4(+). It participates in nitrogen metabolism; urea degradation; CO(2) and NH(3) from urea (urease route): step 1/1. In Helicobacter felis (strain ATCC 49179 / CCUG 28539 / NCTC 12436 / CS1), this protein is Urease subunit beta.